The following is a 450-amino-acid chain: Divalent metal cation transporter MntH (450 aa).

The next 11 membrane-spanning stretches (helical) occupy residues 34–54 (LSFL…GNWI), 61–81 (AQYG…AMLL), 108–128 (IAII…IAEV), 141–161 (IPLI…LFIM), 170–190 (AIVG…VYIS), 212–232 (GILY…NLYL), 263–283 (IQLS…ASLF), 305–325 (PVLG…ALLA), 361–381 (SLAV…AAKI), 383–403 (QLLV…LIPL), and 422–442 (VNII…YLIV).

This sequence belongs to the NRAMP family.

The protein localises to the cell membrane. H(+)-stimulated, divalent metal cation uptake system. In Staphylococcus aureus (strain Mu3 / ATCC 700698), this protein is Divalent metal cation transporter MntH.